The primary structure comprises 123 residues: Immunoglobulin lambda variable 9-49 (123 aa).

The first 19 residues, 1–19 (MAWAPLLLTLLSLLTGSLS), serve as a signal peptide directing secretion. The tract at residues 20–44 (QPVLTQPPSASASLGASVTLTCTLS) is framework-1. One can recognise an Ig-like domain in the interval 21–123 (PVLTQPPSAS…ADHGSGSNFV (103 aa)). Residues cysteine 41 and cysteine 112 are joined by a disulfide bond. Residues 45–51 (SGYSNYK) are complementarity-determining-1. A framework-2 region spans residues 52 to 68 (VDWYQQRPGKGPRFVMR). The segment at 69–76 (VGTGGIVG) is complementarity-determining-2. Positions 77–112 (SKGDGIPDRFSVLGSGLNRYLTIKNIQEEDESDYHC) are framework-3. Tyrosine 96 is modified (phosphotyrosine). A Phosphothreonine modification is found at threonine 98. The tract at residues 113–123 (GADHGSGSNFV) is complementarity-determining-3.

Immunoglobulins are composed of two identical heavy chains and two identical light chains; disulfide-linked.

The protein resides in the secreted. The protein localises to the cell membrane. V region of the variable domain of immunoglobulin light chains that participates in the antigen recognition. Immunoglobulins, also known as antibodies, are membrane-bound or secreted glycoproteins produced by B lymphocytes. In the recognition phase of humoral immunity, the membrane-bound immunoglobulins serve as receptors which, upon binding of a specific antigen, trigger the clonal expansion and differentiation of B lymphocytes into immunoglobulins-secreting plasma cells. Secreted immunoglobulins mediate the effector phase of humoral immunity, which results in the elimination of bound antigens. The antigen binding site is formed by the variable domain of one heavy chain, together with that of its associated light chain. Thus, each immunoglobulin has two antigen binding sites with remarkable affinity for a particular antigen. The variable domains are assembled by a process called V-(D)-J rearrangement and can then be subjected to somatic hypermutations which, after exposure to antigen and selection, allow affinity maturation for a particular antigen. In Homo sapiens (Human), this protein is Immunoglobulin lambda variable 9-49.